The chain runs to 367 residues: 3-isopropylmalate dehydrogenase (367 aa).

75–88 (GPKWDGIERSKRPE) lines the NAD(+) pocket. Residues Arg-95, Arg-105, Arg-133, and Asp-230 each contribute to the substrate site. Mg(2+) is bound by residues Asp-230, Asp-254, and Asp-258. 288–300 (GSAPDIAGQDIAN) is a binding site for NAD(+).

The protein belongs to the isocitrate and isopropylmalate dehydrogenases family. LeuB type 1 subfamily. Homodimer. It depends on Mg(2+) as a cofactor. Mn(2+) is required as a cofactor.

Its subcellular location is the cytoplasm. The catalysed reaction is (2R,3S)-3-isopropylmalate + NAD(+) = 4-methyl-2-oxopentanoate + CO2 + NADH. It functions in the pathway amino-acid biosynthesis; L-leucine biosynthesis; L-leucine from 3-methyl-2-oxobutanoate: step 3/4. Catalyzes the oxidation of 3-carboxy-2-hydroxy-4-methylpentanoate (3-isopropylmalate) to 3-carboxy-4-methyl-2-oxopentanoate. The product decarboxylates to 4-methyl-2 oxopentanoate. The polypeptide is 3-isopropylmalate dehydrogenase (Psychrobacter cryohalolentis (strain ATCC BAA-1226 / DSM 17306 / VKM B-2378 / K5)).